The chain runs to 256 residues: Agamous-like MADS-box protein AGL18 (256 aa).

The region spanning 1–61 (MGRGRIEIKK…GKIYDFSSVC (61 aa)) is the MADS-box domain. The K-box domain maps to 94-184 (NEAVLRNDDS…RKQVEMLGRG (91 aa)). The disordered stretch occupies residues 179–232 (EMLGRGSGPKVLNERPQDSSPEADPESSSSEEDENDNEEHHSDTSLQLGLSSTG). The span at 199-215 (PEADPESSSSEEDENDN) shows a compositional bias: acidic residues. A compositionally biased stretch (polar residues) spans 222 to 232 (TSLQLGLSSTG).

In terms of tissue distribution, mostly expressed in pollen, roots, flowers and siliques, and to a lower extent, in stems and leaves. Expressed in the endosperm and in developing male and female gametophytes. Also present in seedlings.

Its subcellular location is the nucleus. In terms of biological role, probable transcription factor involved in the negative regulation of flowering, probably through the photoperiodic pathway. Prevents premature flowering. Downstream regulator of a subset of the MIKC* MADS-controlled genes required during pollen maturation. This chain is Agamous-like MADS-box protein AGL18 (AGL18), found in Arabidopsis thaliana (Mouse-ear cress).